The following is a 180-amino-acid chain: Translation initiation factor IF-3 (180 aa).

This sequence belongs to the IF-3 family. In terms of assembly, monomer.

Its subcellular location is the cytoplasm. In terms of biological role, IF-3 binds to the 30S ribosomal subunit and shifts the equilibrium between 70S ribosomes and their 50S and 30S subunits in favor of the free subunits, thus enhancing the availability of 30S subunits on which protein synthesis initiation begins. The sequence is that of Translation initiation factor IF-3 from Salmonella typhi.